A 106-amino-acid polypeptide reads, in one-letter code: uncharacterized protein (106 aa).

A helical membrane pass occupies residues 9–27; that stretch reads ALAALAFTLGLIGLAAWAL. Positions 84 to 106 are disordered; the sequence is TPKGPPPASALSPSPVAEPEPVV.

It belongs to the FliO/MopB family.

Its subcellular location is the cell membrane. It localises to the bacterial flagellum basal body. This is an uncharacterized protein from Caulobacter vibrioides (strain ATCC 19089 / CIP 103742 / CB 15) (Caulobacter crescentus).